The sequence spans 332 residues: MDQNGHNDEAETVSCGNGNCKSKIVPGDDHGGDESSGTKRRKKRKTQQKTMKRRELMSYCELPEYMKDNEYILNYYRADWSIRDAFFSVFSFHNESLNVWTHLIGFIFFVALTVANIIHHDGFFPVDAKSPGNVTRWPFFVFLGGSMFCLLASSICHLFCCHSKELNVFLLRIDYAGITAMIITSFFPPIFYIFQCTPRWYFIYLAGITSMGIFTIITLFTPSLSAPKYRAFRALLFASMGLFGIVPAAHALVVNWGNPQRNVTLVYELLMAVFYLVGTGFYVGRVPERLKPGWFDRVGHSHQIFHVFVLLGALSHYAAALLFLDWRDHVGC.

A disordered region spans residues 1 to 52 (MDQNGHNDEAETVSCGNGNCKSKIVPGDDHGGDESSGTKRRKKRKTQQKTMK). Residues 1 to 98 (MDQNGHNDEA…VFSFHNESLN (98 aa)) are Cytoplasmic-facing. Positions 26 to 37 (PGDDHGGDESSG) are enriched in basic and acidic residues. The segment covering 38–52 (TKRRKKRKTQQKTMK) has biased composition (basic residues). A helical membrane pass occupies residues 99–119 (VWTHLIGFIFFVALTVANIIH). Over 120-138 (HDGFFPVDAKSPGNVTRWP) the chain is Extracellular. Residues 139–159 (FFVFLGGSMFCLLASSICHLF) traverse the membrane as a helical segment. The Cytoplasmic portion of the chain corresponds to 160-172 (CCHSKELNVFLLR). Residues 173–193 (IDYAGITAMIITSFFPPIFYI) traverse the membrane as a helical segment. Residues 194–199 (FQCTPR) lie on the Extracellular side of the membrane. Residues 200-220 (WYFIYLAGITSMGIFTIITLF) form a helical membrane-spanning segment. The Cytoplasmic portion of the chain corresponds to 221-233 (TPSLSAPKYRAFR). Residues 234–254 (ALLFASMGLFGIVPAAHALVV) form a helical membrane-spanning segment. Residues 255–262 (NWGNPQRN) lie on the Extracellular side of the membrane. The chain crosses the membrane as a helical span at residues 263-283 (VTLVYELLMAVFYLVGTGFYV). Over 284–303 (GRVPERLKPGWFDRVGHSHQ) the chain is Cytoplasmic. The helical transmembrane segment at 304–324 (IFHVFVLLGALSHYAAALLFL) threads the bilayer. The Extracellular segment spans residues 325–332 (DWRDHVGC).

The protein belongs to the ADIPOR family. Interacts (via N-terminus) with SCRM/ICE1. Expressed in roots, hypocotyls, vasculature of cotyledons and leaves, hydathodes and guard cells. In reproductive organs, expressed in trichomes, veins of sepals, stamens and stigmata of pistils.

The protein localises to the membrane. Functionally, may act as a negative regulator of abscisic acid (ABA)-mediated osmotic stress signaling and function in cross-talk between cold and osmotic signaling. The chain is Heptahelical transmembrane protein 1 (HHP1) from Arabidopsis thaliana (Mouse-ear cress).